A 137-amino-acid polypeptide reads, in one-letter code: Large ribosomal subunit protein uL16 (137 aa).

This sequence belongs to the universal ribosomal protein uL16 family. In terms of assembly, part of the 50S ribosomal subunit.

Binds 23S rRNA and is also seen to make contacts with the A and possibly P site tRNAs. The polypeptide is Large ribosomal subunit protein uL16 (Francisella tularensis subsp. tularensis (strain FSC 198)).